We begin with the raw amino-acid sequence, 809 residues long: Carbon monoxide dehydrogenase large chain (809 aa).

Cysteine 388 contacts Cu(+). Glutamate 763 contacts Mo-molybdopterin cytosine dinucleotide.

As to quaternary structure, dimer of heterotrimers. Each heterotrimer consists of a large, a medium and a small subunit. Cu(+) is required as a cofactor. Mo-molybdopterin cytosine dinucleotide serves as cofactor.

The catalysed reaction is CO + a quinone + H2O = a quinol + CO2. Functionally, catalyzes the oxidation of carbon monoxide to carbon dioxide. The polypeptide is Carbon monoxide dehydrogenase large chain (coxL) (Afipia carboxidovorans (strain ATCC 49405 / DSM 1227 / KCTC 32145 / OM5) (Oligotropha carboxidovorans)).